The following is a 405-amino-acid chain: Pleckstrin homology-like domain family A member 1 (405 aa).

Basic and acidic residues-rich tracts occupy residues 1–11 (MRRTPAAERLS) and 54–63 (RSPEDGREQP). 3 disordered regions span residues 1-67 (MRRT…AHGS), 189-217 (QLQQ…VASL), and 293-405 (QQHL…SNSA). The region spanning 153 to 277 (ALKEGVLEKR…AEITLQMVQY (125 aa)) is the PH domain. Low complexity predominate over residues 189–202 (QLQQQQQQQQPGQG). A compositionally biased stretch (polar residues) spans 204–213 (AEPSQPSGPT). The span at 294–309 (QHLVQQQPPQTQQIQP) shows a compositional bias: low complexity. The 16 X 2 AA repeats of P-Q stretch occupies residues 309 to 344 (PQPQPQIQPQPQPQIQPQPQPQPQPQPQPQPQPQPQ). A compositionally biased stretch (pro residues) spans 310-342 (QPQPQIQPQPQPQIQPQPQPQPQPQPQPQPQPQ). Positions 350–376 (PHPHPHPYSHPHQHPHPHPHPHPHPHP) are enriched in basic residues. Residues 354–377 (PHPYSHPHQHPHPHPHPHPHPHPH) are 11 X 2 AA repeats of P-H. A compositionally biased stretch (low complexity) spans 378–389 (PYQLQHAHQPLH).

Interacts with RPL14, EIF3S7 and PABPC4. In terms of tissue distribution, widely expressed with very high levels in adult liver and high levels in adult lung. According to PubMed:10428057 expressed at low levels in liver. Expressed at increased levels in atherosclerotic lesions observed in hyperhomocysteinema.

It is found in the cytoplasm. Its subcellular location is the cytoplasmic vesicle. The protein resides in the nucleus. It localises to the nucleolus. Seems to be involved in regulation of apoptosis. May be involved in detachment-mediated programmed cell death. May mediate apoptosis during neuronal development. May be involved in regulation of anti-apoptotic effects of IGF1. Required for TCR-induced apoptosis and expression of TNFRSF6/FAS in a T-cell hybridoma cell line. May be involved in translational regulation. The protein is Pleckstrin homology-like domain family A member 1 (Phlda1) of Mus musculus (Mouse).